Reading from the N-terminus, the 408-residue chain is MAQEVFQRTKPHVNIGTIGHVDHGKTTLTAAITMTLAVNSTCTPKKYDEIDAAPEERARGITINTAHVEYETALRHYAHVDCPGHADYIKNMITGAAQMDGAILVVSAADGPMPQTKEHILLAKQVGVPSIVVFLNKEDQVDDEEILQLVDLEVRESLINYEFPGDKVPVVSGSALMALQALTEKPNTSRGENKWVDKIYELMDAVDSYIPTPKRDIEKPFLMPIEDVFSIQGRGTVATGRIERGILKLGDIVELIGLNEKIRSTVVTGLEMFRRLLEQGFAGENIGVLLRGIEKKDIERGMVIAQPGTIEPHTRFEAQVYILRKEEGGRHSPFFAGYRPQFFVRTADVTGVIEAFEYDNGDKTRMVMPGDRVKMIVNLICPIAIEKKMRFAIREGGRTIGAGVVYKY.

The tr-type G domain occupies 10-214 (KPHVNIGTIG…AVDSYIPTPK (205 aa)). A G1 region spans residues 19 to 26 (GHVDHGKT). GTP is bound at residue 19 to 26 (GHVDHGKT). Residue T26 participates in Mg(2+) binding. Residues 60–64 (GITIN) form a G2 region. A G3 region spans residues 81-84 (DCPG). Residues 81–85 (DCPGH) and 136–139 (NKED) each bind GTP. The interval 136 to 139 (NKED) is G4. The interval 174-176 (SAL) is G5.

Belongs to the TRAFAC class translation factor GTPase superfamily. Classic translation factor GTPase family. EF-Tu/EF-1A subfamily.

It is found in the plastid. Its subcellular location is the chloroplast. It catalyses the reaction GTP + H2O = GDP + phosphate + H(+). Functionally, GTP hydrolase that promotes the GTP-dependent binding of aminoacyl-tRNA to the A-site of ribosomes during protein biosynthesis. This chain is Elongation factor Tu, chloroplastic (tufA), found in Chara connivens (Convergent stonewort).